The chain runs to 512 residues: Kynurenine 3-monooxygenase (512 aa).

This sequence belongs to the aromatic-ring hydroxylase family. KMO subfamily. FAD serves as cofactor.

It is found in the mitochondrion outer membrane. It carries out the reaction L-kynurenine + NADPH + O2 + H(+) = 3-hydroxy-L-kynurenine + NADP(+) + H2O. It participates in cofactor biosynthesis; NAD(+) biosynthesis; quinolinate from L-kynurenine: step 1/3. Functionally, catalyzes the hydroxylation of L-kynurenine (L-Kyn) to form 3-hydroxy-L-kynurenine (L-3OHKyn). Required for synthesis of quinolinic acid. In Neosartorya fischeri (strain ATCC 1020 / DSM 3700 / CBS 544.65 / FGSC A1164 / JCM 1740 / NRRL 181 / WB 181) (Aspergillus fischerianus), this protein is Kynurenine 3-monooxygenase (bna4).